The primary structure comprises 360 residues: UDP-N-acetylglucosamine--N-acetylmuramyl-(pentapeptide) pyrophosphoryl-undecaprenol N-acetylglucosamine transferase (360 aa).

UDP-N-acetyl-alpha-D-glucosamine-binding positions include 17-19 (TAG), Asn-130, Arg-166, Ser-200, Ile-247, and Gln-291.

It belongs to the glycosyltransferase 28 family. MurG subfamily.

Its subcellular location is the cell membrane. The enzyme catalyses di-trans,octa-cis-undecaprenyl diphospho-N-acetyl-alpha-D-muramoyl-L-alanyl-D-glutamyl-meso-2,6-diaminopimeloyl-D-alanyl-D-alanine + UDP-N-acetyl-alpha-D-glucosamine = di-trans,octa-cis-undecaprenyl diphospho-[N-acetyl-alpha-D-glucosaminyl-(1-&gt;4)]-N-acetyl-alpha-D-muramoyl-L-alanyl-D-glutamyl-meso-2,6-diaminopimeloyl-D-alanyl-D-alanine + UDP + H(+). It participates in cell wall biogenesis; peptidoglycan biosynthesis. Its function is as follows. Cell wall formation. Catalyzes the transfer of a GlcNAc subunit on undecaprenyl-pyrophosphoryl-MurNAc-pentapeptide (lipid intermediate I) to form undecaprenyl-pyrophosphoryl-MurNAc-(pentapeptide)GlcNAc (lipid intermediate II). The polypeptide is UDP-N-acetylglucosamine--N-acetylmuramyl-(pentapeptide) pyrophosphoryl-undecaprenol N-acetylglucosamine transferase (Corynebacterium efficiens (strain DSM 44549 / YS-314 / AJ 12310 / JCM 11189 / NBRC 100395)).